The primary structure comprises 267 residues: uncharacterized protein (267 aa).

The helical transmembrane segment at Phe30 to Ile52 threads the bilayer.

It localises to the membrane. This is an uncharacterized protein from Aquifex aeolicus (strain VF5).